We begin with the raw amino-acid sequence, 124 residues long: Non-structural protein 2 (124 aa).

The DLNP; interaction with MAP1B motif lies at 121–124 (DLNP).

Belongs to the pneumovirus non-structural protein 2 family. As to quaternary structure, monomer (instable). Homomultimer. Heteromultimer with NS1. Interacts with host RIGI (via N-terminus); this interaction prevents host signaling pathway involved in interferon production. Interacts with host MAP1B/microtubule-associated protein 1B.

It is found in the host mitochondrion. Its function is as follows. Plays a major role in antagonizing the type I IFN-mediated antiviral response. Acts cooperatively with NS1 to repress activation and nuclear translocation of host IFN-regulatory factor IRF3. Interacts with the host cytoplasmic sensor of viral nucleic acids RIGI and prevents the interaction with its downstream partner MAVS. Together with NS2, participates in the proteasomal degradation of host STAT2, IRF3, IRF7, TBK1 and RIGI through a NS-degradasome involving CUL2 and Elongin-C. The degradasome requires an intact mitochondrial MAVS. Induces host SOCS1 expression. Induces activation of NF-kappa-B. Suppresses premature apoptosis by an NF-kappa-B-dependent, interferon-independent mechanism promoting continued viral replication. In Human respiratory syncytial virus B (strain B1), this protein is Non-structural protein 2 (1B).